The chain runs to 340 residues: Armadillo repeat-containing protein 12 (340 aa).

The interval 1-101 (MGKSIPQYLG…SITRCVYLLE (101 aa)) is interaction with TBC1D15. ARM repeat units lie at residues 100 to 139 (LEAEASACTTDDIVLLGYMLDDKDNSVKTQALNTLKAFSG), 179 to 218 (LPDYVHPQLRRVMPALMEILQSDYILAQVQAVRLLSYLAQ), and 278 to 318 (SLHE…SLQY).

Interacts with TBC1D15, TBC1D21, GK2 and IMMT. Interacts with VDAC2 and VDAC3 in a TBC1D21-dependent manner. Interacts (via ARM domains) with RBBP4. As to expression, expressed in testis. Highly expressed in the mid-piece of the elongated and late spermatids. Expressed at higher levels in neuroblastoma tissues and cell lines, than those of normal dorsal ganglia (at protein level). Expressed in breast cancer, colon cancer, hepatocellular carcinoma, lung cancer, pancreas cancer, prostate cancer, renal cancer and gastric cancer, but not in their normal counterparts.

It localises to the nucleus. The protein resides in the mitochondrion outer membrane. In terms of biological role, essential for male fertility and sperm mitochondrial sheath formation. Required for proper mitochondrial elongation and coiling along the flagellum during the formation of the mitochondrial sheath. Facilitates the growth and aggressiveness of neuroblastoma cells. Increases the EZH2 activity and H3K27me3 levels in a RBBP4-dependent manner, and facilitates the enrichment of polycomb repressive complex 2 and H3K27me3 on gene promoters, resulting in transcriptional repression of tumor suppressors affecting the proliferation, invasion, and metastasis of tumor cells. The sequence is that of Armadillo repeat-containing protein 12 (ARMC12) from Homo sapiens (Human).